The chain runs to 425 residues: Riboflavin biosynthesis protein RibBA (425 aa).

The segment at 1–204 (MTRLDSVERA…IADLIEWRRK (204 aa)) is DHBP synthase. Residues 28–29 (RE), D33, 141–145 (RPGHT), and E165 contribute to the D-ribulose 5-phosphate site. E29 contributes to the Mg(2+) binding site. H144 contributes to the Mg(2+) binding site. Positions 205–425 (HEKHIERVAE…HLPGEFGGAL (221 aa)) are GTP cyclohydrolase II. Residue 259 to 263 (RVHSE) coordinates GTP. Zn(2+)-binding residues include C264, C275, and C277. GTP is bound by residues Q280, 303-305 (EGR), and T325. D337 serves as the catalytic Proton acceptor; for GTP cyclohydrolase activity. R339 serves as the catalytic Nucleophile; for GTP cyclohydrolase activity. T360 and K365 together coordinate GTP.

The protein in the N-terminal section; belongs to the DHBP synthase family. This sequence in the C-terminal section; belongs to the GTP cyclohydrolase II family. It depends on Mg(2+) as a cofactor. The cofactor is Mn(2+). Zn(2+) is required as a cofactor.

It catalyses the reaction D-ribulose 5-phosphate = (2S)-2-hydroxy-3-oxobutyl phosphate + formate + H(+). The enzyme catalyses GTP + 4 H2O = 2,5-diamino-6-hydroxy-4-(5-phosphoribosylamino)-pyrimidine + formate + 2 phosphate + 3 H(+). It participates in cofactor biosynthesis; riboflavin biosynthesis; 2-hydroxy-3-oxobutyl phosphate from D-ribulose 5-phosphate: step 1/1. It functions in the pathway cofactor biosynthesis; riboflavin biosynthesis; 5-amino-6-(D-ribitylamino)uracil from GTP: step 1/4. Its function is as follows. Catalyzes the conversion of D-ribulose 5-phosphate to formate and 3,4-dihydroxy-2-butanone 4-phosphate. Functionally, catalyzes the conversion of GTP to 2,5-diamino-6-ribosylamino-4(3H)-pyrimidinone 5'-phosphate (DARP), formate and pyrophosphate. The chain is Riboflavin biosynthesis protein RibBA from Mycobacterium bovis (strain ATCC BAA-935 / AF2122/97).